The sequence spans 253 residues: uncharacterized protein (253 aa).

Positions 1–19 are cleaved as a signal peptide; the sequence is MRYLKKVTIYISLLILVSG. C20 carries N-palmitoyl cysteine lipidation. C20 carries S-diacylglycerol cysteine lipidation.

This sequence belongs to the staphylococcal tandem lipoprotein family.

Its subcellular location is the cell membrane. This is an uncharacterized protein from Staphylococcus epidermidis (strain ATCC 35984 / DSM 28319 / BCRC 17069 / CCUG 31568 / BM 3577 / RP62A).